The following is a 442-amino-acid chain: UDP-glycosyltransferase 79B8 (442 aa).

UDP-alpha-D-glucose-binding positions include Ser260, 319–321, 336–344, and 358–361; these read VQQ, HCGPGTIWE, and LGDQ.

This sequence belongs to the UDP-glycosyltransferase family.

This is UDP-glycosyltransferase 79B8 (UGT79B8) from Arabidopsis thaliana (Mouse-ear cress).